Consider the following 180-residue polypeptide: Pro-glucagon (180 aa).

The first 20 residues, 1-20, serve as a signal peptide directing secretion; that stretch reads MKNIYIVAGFFVVLVQGSWQ. The interval 25-59 is disordered; sequence DTEEKSRSFPASQTDPLEDPDQINEDKRHSQGTFT. Serine 54 is modified (phosphoserine). The propeptide occupies 84–89; that stretch reads NRNNIA. 2 positions are modified to phosphoserine: serine 105 and serine 108. At arginine 127 the chain carries Arginine amide. Positions 131–145 are excised as a propeptide; the sequence is DFPEEVTIVEELGRR. Residues serine 150 and serine 152 each carry the phosphoserine modification.

This sequence belongs to the glucagon family. Post-translationally, proglucagon is post-translationally processed in a tissue-specific manner in pancreatic A cells and intestinal L cells. In pancreatic A cells, the major bioactive hormone is glucagon cleaved by PCSK2/PC2. In the intestinal L cells PCSK1/PC1 liberates GLP-1, GLP-2, glicentin and oxyntomodulin. GLP-1 is further N-terminally truncated by post-translational processing in the intestinal L cells resulting in GLP-1(7-37) GLP-1-(7-36)amide. The C-terminal amidation is neither important for the metabolism of GLP-1 nor for its effects on the endocrine pancreas.

Its subcellular location is the secreted. Functionally, plays a key role in glucose metabolism and homeostasis. Regulates blood glucose by increasing gluconeogenesis and decreasing glycolysis. A counterregulatory hormone of insulin, raises plasma glucose levels in response to insulin-induced hypoglycemia. Plays an important role in initiating and maintaining hyperglycemic conditions in diabetes. Potent stimulator of glucose-dependent insulin release. Also stimulates insulin release in response to IL6. Plays important roles on gastric motility and the suppression of plasma glucagon levels. May be involved in the suppression of satiety and stimulation of glucose disposal in peripheral tissues, independent of the actions of insulin. Has growth-promoting activities on intestinal epithelium. May also regulate the hypothalamic pituitary axis (HPA) via effects on LH, TSH, CRH, oxytocin, and vasopressin secretion. Increases islet mass through stimulation of islet neogenesis and pancreatic beta cell proliferation. Inhibits beta cell apoptosis. In terms of biological role, stimulates intestinal growth and up-regulates villus height in the small intestine, concomitant with increased crypt cell proliferation and decreased enterocyte apoptosis. The gastrointestinal tract, from the stomach to the colon is the principal target for GLP-2 action. Plays a key role in nutrient homeostasis, enhancing nutrient assimilation through enhanced gastrointestinal function, as well as increasing nutrient disposal. Stimulates intestinal glucose transport and decreases mucosal permeability. Its function is as follows. Significantly reduces food intake. Inhibits gastric emptying in humans. Suppression of gastric emptying may lead to increased gastric distension, which may contribute to satiety by causing a sensation of fullness. Functionally, may modulate gastric acid secretion and the gastro-pyloro-duodenal activity. May play an important role in intestinal mucosal growth in the early period of life. This is Pro-glucagon (GCG) from Mesocricetus auratus (Golden hamster).